Reading from the N-terminus, the 230-residue chain is UPF0494 membrane protein C1348.07 (230 aa).

Transmembrane regions (helical) follow at residues 78 to 98 (WPLL…NFEV), 120 to 140 (IWGP…GLIY), and 148 to 168 (AIPL…VAMV).

The protein belongs to the UPF0494 family.

It localises to the vacuole. It is found in the membrane. The protein is UPF0494 membrane protein C1348.07 of Schizosaccharomyces pombe (strain 972 / ATCC 24843) (Fission yeast).